Consider the following 209-residue polypeptide: Guanylate kinase (209 aa).

Positions 5–182 (GLLIVISGPS…AVTKINSIIV (178 aa)) constitute a Guanylate kinase-like domain. 12-19 (GPSGAGKG) serves as a coordination point for ATP.

It belongs to the guanylate kinase family.

Its subcellular location is the cytoplasm. It carries out the reaction GMP + ATP = GDP + ADP. In terms of biological role, essential for recycling GMP and indirectly, cGMP. This chain is Guanylate kinase, found in Clostridium acetobutylicum (strain ATCC 824 / DSM 792 / JCM 1419 / IAM 19013 / LMG 5710 / NBRC 13948 / NRRL B-527 / VKM B-1787 / 2291 / W).